The primary structure comprises 355 residues: Protein RecA (355 aa).

65 to 72 (GPESSGKT) contributes to the ATP binding site.

It belongs to the RecA family.

The protein resides in the cytoplasm. In terms of biological role, can catalyze the hydrolysis of ATP in the presence of single-stranded DNA, the ATP-dependent uptake of single-stranded DNA by duplex DNA, and the ATP-dependent hybridization of homologous single-stranded DNAs. It interacts with LexA causing its activation and leading to its autocatalytic cleavage. This Pseudomonas putida (strain GB-1) protein is Protein RecA.